The following is a 626-amino-acid chain: Chaperone protein HtpG (626 aa).

Residues 1–338 (MTANKNQKKT…SNDLPLNVSR (338 aa)) are a; substrate-binding. A b region spans residues 339 to 553 (EILQDHKLVY…SNEMSTQMAK (215 aa)). Residues 554-626 (LFSAAGQTVP…ARINDLLINN (73 aa)) form a c region.

The protein belongs to the heat shock protein 90 family. In terms of assembly, homodimer.

The protein resides in the cytoplasm. In terms of biological role, molecular chaperone. Has ATPase activity. The chain is Chaperone protein HtpG from Buchnera aphidicola subsp. Baizongia pistaciae (strain Bp).